An 80-amino-acid chain; its full sequence is Kappa-actitoxin-Avd4f (80 aa).

Positions 1–19 (MNKALFLCLVVLCAAVVFA) are cleaved as a signal peptide. A propeptide spanning residues 20–31 (AEDLQKAKHAPF) is cleaved from the precursor. Disulfide bonds link cysteine 41–cysteine 76, cysteine 43–cysteine 69, and cysteine 59–cysteine 77.

It belongs to the sea anemone type 3 (BDS) potassium channel toxin family. As to expression, moderately expressed in the ectodermal tissue from the distal and proximal tentacles, body wall, and oral disk.

The protein localises to the secreted. Its subcellular location is the nematocyst. Functionally, blocks Kv3 voltage-gated potassium channels. Reduces blood pressure. This Anemonia viridis (Snakelocks anemone) protein is Kappa-actitoxin-Avd4f.